The primary structure comprises 382 residues: D-alanine--D-alanine ligase (382 aa).

The ATP-grasp domain maps to 139 to 348 (KRLMRDAGLP…PPALMDALIA (210 aa)). 168-223 (EALESRTLFVKPANMGSSVGVSRVADAGQFDQALAHAFAYDEKILIERAVPRAREI) contacts ATP. Aspartate 300, glutamate 315, and asparagine 317 together coordinate Mg(2+).

Belongs to the D-alanine--D-alanine ligase family. Mg(2+) serves as cofactor. Requires Mn(2+) as cofactor.

Its subcellular location is the cytoplasm. It carries out the reaction 2 D-alanine + ATP = D-alanyl-D-alanine + ADP + phosphate + H(+). Its pathway is cell wall biogenesis; peptidoglycan biosynthesis. In terms of biological role, cell wall formation. This is D-alanine--D-alanine ligase from Methylobacterium sp. (strain 4-46).